The primary structure comprises 477 residues: UDP-N-acetylmuramate--L-alanine ligase (477 aa).

Position 122 to 128 (122 to 128 (GTHGKTT)) interacts with ATP.

Belongs to the MurCDEF family.

It localises to the cytoplasm. The enzyme catalyses UDP-N-acetyl-alpha-D-muramate + L-alanine + ATP = UDP-N-acetyl-alpha-D-muramoyl-L-alanine + ADP + phosphate + H(+). The protein operates within cell wall biogenesis; peptidoglycan biosynthesis. Functionally, cell wall formation. This chain is UDP-N-acetylmuramate--L-alanine ligase, found in Xylella fastidiosa (strain M23).